A 427-amino-acid polypeptide reads, in one-letter code: Enolase (427 aa).

Glutamine 163 provides a ligand contact to (2R)-2-phosphoglycerate. The active-site Proton donor is the glutamate 205. Residues aspartate 242, glutamate 285, and aspartate 312 each contribute to the Mg(2+) site. Positions 337, 366, 367, and 388 each coordinate (2R)-2-phosphoglycerate. The active-site Proton acceptor is lysine 337.

It belongs to the enolase family. Requires Mg(2+) as cofactor.

It localises to the cytoplasm. The protein localises to the secreted. The protein resides in the cell surface. The enzyme catalyses (2R)-2-phosphoglycerate = phosphoenolpyruvate + H2O. The protein operates within carbohydrate degradation; glycolysis; pyruvate from D-glyceraldehyde 3-phosphate: step 4/5. Catalyzes the reversible conversion of 2-phosphoglycerate (2-PG) into phosphoenolpyruvate (PEP). It is essential for the degradation of carbohydrates via glycolysis. The sequence is that of Enolase from Methylocella silvestris (strain DSM 15510 / CIP 108128 / LMG 27833 / NCIMB 13906 / BL2).